Here is a 126-residue protein sequence, read N- to C-terminus: Aspartate 1-decarboxylase 1 (126 aa).

Catalysis depends on Ser25, which acts as the Schiff-base intermediate with substrate; via pyruvic acid. Pyruvic acid (Ser) is present on Ser25. Thr57 is a binding site for substrate. Residue Tyr58 is the Proton donor of the active site. 73-75 is a binding site for substrate; the sequence is GSA.

It belongs to the PanD family. In terms of assembly, heterooctamer of four alpha and four beta subunits. The cofactor is pyruvate. Is synthesized initially as an inactive proenzyme, which is activated by self-cleavage at a specific serine bond to produce a beta-subunit with a hydroxyl group at its C-terminus and an alpha-subunit with a pyruvoyl group at its N-terminus.

The protein localises to the cytoplasm. The catalysed reaction is L-aspartate + H(+) = beta-alanine + CO2. It functions in the pathway cofactor biosynthesis; (R)-pantothenate biosynthesis; beta-alanine from L-aspartate: step 1/1. In terms of biological role, catalyzes the pyruvoyl-dependent decarboxylation of aspartate to produce beta-alanine. The protein is Aspartate 1-decarboxylase 1 of Polaromonas sp. (strain JS666 / ATCC BAA-500).